Reading from the N-terminus, the 613-residue chain is AP-5 complex subunit mu (613 aa).

The region spanning 309 to 563 (KQRLLFTIHE…DYAKVSFKIV (255 aa)) is the MHD domain. The disordered stretch occupies residues 501–522 (SPLQSRRKGDGDDEESEDESAE). Acidic residues predominate over residues 511–521 (GDDEESEDESA).

This sequence belongs to the adaptor complexes medium subunit family. Probably part of the adaptor protein complex 5 (AP-5).

The protein resides in the cytoplasmic vesicle membrane. This is AP-5 complex subunit mu (AP5M) from Arabidopsis thaliana (Mouse-ear cress).